The following is a 367-amino-acid chain: Probable ATP-dependent RNA helicase MJ0669 (367 aa).

The Q motif signature appears at 6–34 (MNFNELNLSDNILNAIRNKGFEKPTDIQM). In terms of domain architecture, Helicase ATP-binding spans 38 to 206 (PLFLNDEYNI…KKYMGDYSFI (169 aa)). 51–58 (ARTGSGKT) provides a ligand contact to ATP. The DEAD box signature appears at 154–157 (DEAD). Residues 213–367 (NIEQSYVEVN…KLKIKKLKFG (155 aa)) enclose the Helicase C-terminal domain.

It belongs to the DEAD box helicase family. In terms of assembly, homodimer.

It carries out the reaction ATP + H2O = ADP + phosphate + H(+). This is Probable ATP-dependent RNA helicase MJ0669 from Methanocaldococcus jannaschii (strain ATCC 43067 / DSM 2661 / JAL-1 / JCM 10045 / NBRC 100440) (Methanococcus jannaschii).